The chain runs to 283 residues: Pantothenate synthetase (283 aa).

An ATP-binding site is contributed by 30–37 (MGNLHSGH). The active-site Proton donor is histidine 37. Glutamine 61 provides a ligand contact to (R)-pantoate. Residue glutamine 61 coordinates beta-alanine. 149–152 (GQKD) is an ATP binding site. (R)-pantoate is bound at residue glutamine 155. ATP contacts are provided by residues valine 178 and 186–189 (LSSR).

Belongs to the pantothenate synthetase family. As to quaternary structure, homodimer.

The protein resides in the cytoplasm. The enzyme catalyses (R)-pantoate + beta-alanine + ATP = (R)-pantothenate + AMP + diphosphate + H(+). The protein operates within cofactor biosynthesis; (R)-pantothenate biosynthesis; (R)-pantothenate from (R)-pantoate and beta-alanine: step 1/1. Catalyzes the condensation of pantoate with beta-alanine in an ATP-dependent reaction via a pantoyl-adenylate intermediate. The chain is Pantothenate synthetase from Pseudomonas fluorescens (strain SBW25).